The primary structure comprises 221 residues: Protein LURP-one-related 17 (221 aa).

Residues 1–20 (MFPFLKQRSRSVHGEDAPSS) form a disordered region.

Belongs to the LOR family.

In terms of biological role, might be related to the phospholipid scramblase and tubby-like superfamily of membrane tethered transcription factors. The polypeptide is Protein LURP-one-related 17 (Arabidopsis thaliana (Mouse-ear cress)).